Reading from the N-terminus, the 255-residue chain is GTP cyclohydrolase III (255 aa).

Belongs to the archaeal-type GTP cyclohydrolase family.

It catalyses the reaction GTP + 3 H2O = 2-amino-5-formylamino-6-(5-phospho-D-ribosylamino)pyrimidin-4(3H)-one + 2 phosphate + 2 H(+). Functionally, catalyzes the formation of 2-amino-5-formylamino-6-ribofuranosylamino-4(3H)-pyrimidinone ribonucleotide monophosphate and inorganic phosphate from GTP. Also has an independent pyrophosphate phosphohydrolase activity. The polypeptide is GTP cyclohydrolase III (Methanosphaera stadtmanae (strain ATCC 43021 / DSM 3091 / JCM 11832 / MCB-3)).